Here is a 173-residue protein sequence, read N- to C-terminus: Photosystem I assembly protein Ycf3 (173 aa).

TPR repeat units lie at residues 35–68, 72–105, and 120–153; these read AYIYYRDGLAAQNNGDYSEALDYYNESLLLEENK, GETLKNMAIIYMSNGEEDRSIETYQKALEENPKQ, and GRFAEQNGDLDQRDMWFDKAAQVWSKAVRLYPGG.

It belongs to the Ycf3 family.

It localises to the cellular thylakoid membrane. Functionally, essential for the assembly of the photosystem I (PSI) complex. May act as a chaperone-like factor to guide the assembly of the PSI subunits. In Prochlorococcus marinus subsp. pastoris (strain CCMP1986 / NIES-2087 / MED4), this protein is Photosystem I assembly protein Ycf3.